Consider the following 44-residue polypeptide: MSYKCSRCKRDVELEEYGGVRCPFCGHRVLLKERAPEIKEVPVE.

Positions 8, 22, and 25 each coordinate Zn(2+).

This sequence belongs to the archaeal Rpo12/eukaryotic RPC10 RNA polymerase subunit family. Part of the RNA polymerase complex. Requires Zn(2+) as cofactor.

The protein localises to the cytoplasm. It carries out the reaction RNA(n) + a ribonucleoside 5'-triphosphate = RNA(n+1) + diphosphate. DNA-dependent RNA polymerase (RNAP) catalyzes the transcription of DNA into RNA using the four ribonucleoside triphosphates as substrates. The sequence is that of DNA-directed RNA polymerase subunit Rpo12 from Haloquadratum walsbyi (strain DSM 16790 / HBSQ001).